The primary structure comprises 421 residues: Mannose-1-phosphate guanyltransferase alpha-A (421 aa).

It belongs to the transferase hexapeptide repeat family.

It catalyses the reaction alpha-D-mannose 1-phosphate + GTP + H(+) = GDP-alpha-D-mannose + diphosphate. The protein operates within nucleotide-sugar biosynthesis; GDP-alpha-D-mannose biosynthesis; GDP-alpha-D-mannose from alpha-D-mannose 1-phosphate (GTP route): step 1/1. In Xenopus laevis (African clawed frog), this protein is Mannose-1-phosphate guanyltransferase alpha-A (gmppa-a).